We begin with the raw amino-acid sequence, 236 residues long: 2-C-methyl-D-erythritol 4-phosphate cytidylyltransferase (236 aa).

Belongs to the IspD/TarI cytidylyltransferase family. IspD subfamily. As to quaternary structure, homodimer.

The catalysed reaction is 2-C-methyl-D-erythritol 4-phosphate + CTP + H(+) = 4-CDP-2-C-methyl-D-erythritol + diphosphate. It functions in the pathway isoprenoid biosynthesis; isopentenyl diphosphate biosynthesis via DXP pathway; isopentenyl diphosphate from 1-deoxy-D-xylulose 5-phosphate: step 2/6. In terms of biological role, catalyzes the formation of 4-diphosphocytidyl-2-C-methyl-D-erythritol from CTP and 2-C-methyl-D-erythritol 4-phosphate (MEP). The chain is 2-C-methyl-D-erythritol 4-phosphate cytidylyltransferase from Salmonella paratyphi C (strain RKS4594).